The chain runs to 246 residues: 2-aminoethylphosphonate cytidylyltransferase (246 aa).

CMP-(2-aminoethyl)phosphonate is bound by residues Ala19, Gly20, Lys34, Ser97, Glu114, and Ala115. Mg(2+)-binding residues include Asp116 and Asp145. Residues Asp145, Lys161, and Asp202 each contribute to the CMP-(2-aminoethyl)phosphonate site. Mg(2+)-binding residues include Glu226 and Asp228.

Belongs to the LicC/PntC cytidylyltransferase family. In terms of assembly, monomer. The cofactor is Mg(2+).

The catalysed reaction is (2-aminoethyl)phosphonate + CTP = CMP-(2-aminoethyl)phosphonate + diphosphate. Its pathway is phosphorus metabolism; phosphonate biosynthesis. Cytidylyltransferase involved in the biosynthesis of cell-surface phosphonates. Catalyzes the activation of 2-aminoethylphosphonate (AEP) to CMP-2-aminoethylphosphonate (CMP-AEP). Can also use phosphocholine, with much lower efficiency. Exhibits strong activity towards CTP, limited activity towards ATP and no activity with GTP. This Lancefieldella rimae (strain ATCC 49626 / DSM 7090 / CCUG 31168 / NBRC 15546 / VPI D140H-11A) (Atopobium rimae) protein is 2-aminoethylphosphonate cytidylyltransferase.